Reading from the N-terminus, the 201-residue chain is Glutathione peroxidase 1 (201 aa).

Position 32 is a phosphoserine (Ser32). The active site involves Sec47. A non-standard amino acid (selenocysteine) is located at residue Sec47. Lys86, Lys112, and Lys146 each carry N6-acetyllysine; alternate. Residues Lys86, Lys112, and Lys146 each carry the N6-succinyllysine; alternate modification. Phosphoserine is present on residues Ser195 and Ser199.

This sequence belongs to the glutathione peroxidase family. Homotetramer. Interacts with MIEN1. During periods of oxidative stress, Sec-47 may react with a superoxide radical, irreversibly lose hydroselenide and be converted to dehydroalanine.

It localises to the cytoplasm. Its subcellular location is the mitochondrion. It carries out the reaction 2 glutathione + H2O2 = glutathione disulfide + 2 H2O. The catalysed reaction is a hydroperoxy polyunsaturated fatty acid + 2 glutathione = a hydroxy polyunsaturated fatty acid + glutathione disulfide + H2O. The enzyme catalyses tert-butyl hydroperoxide + 2 glutathione = tert-butanol + glutathione disulfide + H2O. It catalyses the reaction cumene hydroperoxide + 2 glutathione = 2-phenylpropan-2-ol + glutathione disulfide + H2O. It carries out the reaction (13S)-hydroperoxy-(9Z,11E)-octadecadienoate + 2 glutathione = (13S)-hydroxy-(9Z,11E)-octadecadienoate + glutathione disulfide + H2O. The catalysed reaction is (9S)-hydroperoxy-(10E,12Z)-octadecadienoate + 2 glutathione = (9S)-hydroxy-(10E,12Z)-octadecadienoate + glutathione disulfide + H2O. The enzyme catalyses (5S)-hydroperoxy-(6E,8Z,11Z,14Z)-eicosatetraenoate + 2 glutathione = (5S)-hydroxy-(6E,8Z,11Z,14Z)-eicosatetraenoate + glutathione disulfide + H2O. It catalyses the reaction (12S)-hydroperoxy-(5Z,8Z,10E,14Z)-eicosatetraenoate + 2 glutathione = (12S)-hydroxy-(5Z,8Z,10E,14Z)-eicosatetraenoate + glutathione disulfide + H2O. It carries out the reaction (12R)-hydroperoxy-(5Z,8Z,10E,14Z)-eicosatetraenoate + 2 glutathione = (12R)-hydroxy-(5Z,8Z,10E,14Z)-eicosatetraenoate + glutathione disulfide + H2O. The catalysed reaction is (15S)-hydroperoxy-(5Z,8Z,11Z,13E)-eicosatetraenoate + 2 glutathione = (15S)-hydroxy-(5Z,8Z,11Z,13E)-eicosatetraenoate + glutathione disulfide + H2O. The enzyme catalyses (5S)-hydroperoxy-(6E,8Z,11Z,14Z,17Z)-eicosapentaenoate + 2 glutathione = (5S)-hydroxy-(6E,8Z,11Z,14Z,17Z)-eicosapentaenoate + glutathione disulfide + H2O. It catalyses the reaction (12S)-hydroperoxy-(5Z,8Z,10E,14Z,17Z)-eicosapentaenoate + 2 glutathione = (12S)-hydroxy-(5Z,8Z,10E,14Z,17Z)-eicosapentaenoate + glutathione disulfide + H2O. It carries out the reaction (15S)-hydroperoxy-(5Z,8Z,11Z,13E,17Z)-eicosapentaenoate + 2 glutathione = (15S)-hydroxy-(5Z,8Z,11Z,13E,17Z)-eicosapentaenoate + glutathione disulfide + H2O. The catalysed reaction is (15S)-hydroperoxy-(11Z,13E)-eicosadienoate + 2 glutathione = (15S)-hydroxy-(11Z,13E)-eicosadienoate + glutathione disulfide + H2O. The enzyme catalyses (17S)-hydroperoxy-(4Z,7Z,10Z,13Z,15E,19Z)-docosahexaenoate + 2 glutathione = (17S)-hydroxy-(4Z,7Z,10Z,13Z,15E,19Z)-docosahexaenoate + glutathione disulfide + H2O. In terms of biological role, catalyzes the reduction of hydroperoxides in a glutathione-dependent manner thus regulating cellular redox homeostasis. Can reduce small soluble hydroperoxides such as H2O2, cumene hydroperoxide and tert-butyl hydroperoxide, as well as several fatty acid-derived hydroperoxides. In platelets catalyzes the reduction of 12-hydroperoxyeicosatetraenoic acid, the primary product of the arachidonate 12-lipoxygenase pathway. The polypeptide is Glutathione peroxidase 1 (GPX1) (Pan troglodytes (Chimpanzee)).